The primary structure comprises 814 residues: Oxysterol-binding protein-related protein 1C (814 aa).

The PH domain occupies 103–235; that stretch reads GNGIAGILYK…WVEALQAVKD (133 aa). Residues 300-367 adopt a coiled-coil conformation; that stretch reads LLIDTLRQLE…AEEEFDEEEN (68 aa). Disordered regions lie at residues 319–366 and 379–411; these read VVDE…DEEE and SSFKSSGSGFRTSSFSSDEDGFESEDDIDPSIK. Acidic residues predominate over residues 347 to 366; it reads ESDDDNERGDAAEEEFDEEE. Positions 379-394 are enriched in low complexity; sequence SSFKSSGSGFRTSSFS. Positions 395–407 are enriched in acidic residues; that stretch reads SDEDGFESEDDID.

It belongs to the OSBP family. As to expression, expressed in roots, leaves, stems, flowers and pollen.

May be involved in the transport of sterols. This Arabidopsis thaliana (Mouse-ear cress) protein is Oxysterol-binding protein-related protein 1C (ORP1C).